The primary structure comprises 622 residues: Pesticidal crystal protein Cry2Ac (622 aa).

This sequence belongs to the delta endotoxin family.

Functionally, promotes colloidosmotic lysis by binding to the midgut epithelial cells of lepidopteran larvae. Has low activity on dipteran larvae. This Bacillus thuringiensis protein is Pesticidal crystal protein Cry2Ac (cry2Ac).